A 73-amino-acid polypeptide reads, in one-letter code: Disintegrin barbourin (73 aa).

The region spanning 1–73 is the Disintegrin domain; it reads EAGEECDCGS…ADCPRNGLYG (73 aa). Disulfide bonds link Cys6–Cys21, Cys8–Cys16, Cys15–Cys38, Cys29–Cys35, Cys34–Cys59, and Cys47–Cys66. The Cell attachment site; atypical (KGD) signature appears at 51–53; that stretch reads KGD.

This sequence belongs to the venom metalloproteinase (M12B) family. P-II subfamily. P-IIa sub-subfamily. As to quaternary structure, monomer. Expressed by the venom gland.

Its subcellular location is the secreted. Its function is as follows. Inhibitor of ligand binding to the integrins alpha-IIb/beta-3 (ITGA2B/ITGB3). Competition with fibrinogen for the RGD recognition sites on the alpha-IIb/beta-3 integrin results in the inhibition of platelet aggregation induced by ADP, thrombin, platelet-activating factor and collagen. This is Disintegrin barbourin from Sistrurus miliarius barbouri (Dusky pigmy rattlesnake).